The primary structure comprises 331 residues: Smad-related protein daf-14 (331 aa).

Positions 134–331 (WCTIFYYELT…NERPEIGSRS (198 aa)) constitute an MH2 domain. Residues 168–187 (ECRMSLTSQPSSRNSKSSQI) form a disordered region. Low complexity predominate over residues 175–185 (SQPSSRNSKSS).

As to quaternary structure, interacts with R-SMAD daf-8 and co-SMAD daf-3. Interacts with daf-3 in a daf-8 dependent manner.

Its function is as follows. Probably an atypical receptor-regulated SMAD (R-SMAD) that is an intracellular signal transducer and transcriptional modulator activated by TGF-beta-like daf-7 signaling. Plays a role in TGF-beta-like daf-7 signaling in regulating entry into a developmentally arrested larval state known as dauer, in response to harsh environmental conditions; partially redundant with R-SMAD daf-8. This chain is Smad-related protein daf-14, found in Caenorhabditis elegans.